The following is a 558-amino-acid chain: Glutamine--tRNA ligase (558 aa).

A 'HIGH' region motif is present at residues 36–46 (PEPNGYLHLGH). ATP contacts are provided by residues 37-39 (EPN) and 43-49 (HLGHAKS). 2 residues coordinate L-glutamine: D69 and Y214. Residues T233, 263 to 264 (RL), and 271 to 273 (LSK) each bind ATP. The 'KMSKS' region signature appears at 270–274 (LLSKR).

This sequence belongs to the class-I aminoacyl-tRNA synthetase family. In terms of assembly, monomer.

The protein localises to the cytoplasm. The enzyme catalyses tRNA(Gln) + L-glutamine + ATP = L-glutaminyl-tRNA(Gln) + AMP + diphosphate. This Nitrobacter hamburgensis (strain DSM 10229 / NCIMB 13809 / X14) protein is Glutamine--tRNA ligase.